An 81-amino-acid chain; its full sequence is MKTLLLTLVVVTIVCLDLGYTMTCCNQQSSQPKTTTTCAESSCYKKTWRDHRGTIIERGCGCPNVKPGIQLVCCETNECNN.

Residues 1-21 (MKTLLLTLVVVTIVCLDLGYT) form the signal peptide. Intrachain disulfides connect Cys24–Cys43, Cys38–Cys60, Cys62–Cys73, and Cys74–Cys79.

This sequence belongs to the three-finger toxin family. Short-chain subfamily. Type I alpha-neurotoxin sub-subfamily. As to expression, expressed by the venom gland.

Its subcellular location is the secreted. Binds to muscle nicotinic acetylcholine receptor (nAChR) and inhibit acetylcholine from binding to the receptor, thereby impairing neuromuscular transmission. The protein is Short neurotoxin 1 of Austrelaps superbus (Lowland copperhead snake).